A 471-amino-acid chain; its full sequence is Heat shock 70 kDa protein 13 (471 aa).

A signal peptide spans 1–22 (MAREMTILGSAVLTLLLAGYLA). Residues 314-352 (EEQDRKEPHSSDTELPKDKLSSADDHRVNSGFGRGLSDK) form a disordered region. The span at 315–341 (EQDRKEPHSSDTELPKDKLSSADDHRV) shows a compositional bias: basic and acidic residues.

The protein belongs to the heat shock protein 70 family. Binds UBQLN2.

It localises to the microsome. Its subcellular location is the endoplasmic reticulum. Functionally, has peptide-independent ATPase activity. This chain is Heat shock 70 kDa protein 13 (HSPA13), found in Pongo abelii (Sumatran orangutan).